A 182-amino-acid chain; its full sequence is Fatty-acid and retinol-binding protein 2 (182 aa).

Residues 1-17 (MIRAFLVVALASVAVFS) form the signal peptide. 2 coiled-coil regions span residues 46-73 (LKAI…EEEF) and 131-152 (TLDS…LSDD).

It belongs to the fatty-acid and retinol-binding protein (FARBP) family.

Its subcellular location is the secreted. Its function is as follows. Probably binds lipids. The sequence is that of Fatty-acid and retinol-binding protein 2 (far-2) from Caenorhabditis elegans.